The primary structure comprises 287 residues: Elongation factor Ts (287 aa).

Residues 80–83 (TDFL) form an involved in Mg(2+) ion dislocation from EF-Tu region.

This sequence belongs to the EF-Ts family.

It localises to the cytoplasm. In terms of biological role, associates with the EF-Tu.GDP complex and induces the exchange of GDP to GTP. It remains bound to the aminoacyl-tRNA.EF-Tu.GTP complex up to the GTP hydrolysis stage on the ribosome. The chain is Elongation factor Ts from Ectopseudomonas mendocina (strain ymp) (Pseudomonas mendocina).